Here is a 1005-residue protein sequence, read N- to C-terminus: Vacuolar membrane protease (1005 aa).

Residues 1 to 14 (MAKETTARSILGYQ) are Cytoplasmic-facing. A helical transmembrane segment spans residues 15 to 35 (TLPTTALIALIYVVAFFSVLV). At 36–353 (SDQLPSIPHP…PEDSAKQKSK (318 aa)) the chain is on the vacuolar side. N-linked (GlcNAc...) asparagine glycosylation occurs at asparagine 107. Histidine 152 and aspartate 164 together coordinate Zn(2+). Glutamate 196 (proton acceptor) is an active-site residue. Position 197 (glutamate 197) interacts with Zn(2+). Asparagine 213 carries an N-linked (GlcNAc...) asparagine glycan. Glutamate 222 and histidine 311 together coordinate Zn(2+). Residues 354–374 (PGVYFDRPVVLALLWAIGAVL) form a helical membrane-spanning segment. Residues 375 to 448 (KHNAGSPPPP…LITVWKQASF (74 aa)) are Cytoplasmic-facing. The tract at residues 379-420 (GSPPPPPKPTVPHSANNASAGTGRPGASTRQPTRSFGSNEDA) is disordered. Polar residues predominate over residues 406–419 (STRQPTRSFGSNED). Residues 449–469 (WIALIVTVGLQALLAWGYVAI) traverse the membrane as a helical segment. The Vacuolar portion of the chain corresponds to 470-479 (NPFTIYSRPY). A helical transmembrane segment spans residues 480–500 (FVLLSFFALSFFSMTLVLQAA). Over 501–519 (FPSSPVKHAIEVREQEKTT) the chain is Cytoplasmic. A helical membrane pass occupies residues 520 to 540 (ILLHLHLLSWIALLLSTILIG). Residues 541 to 543 (KSQ) lie on the Vacuolar side of the membrane. Residues 544-564 (VGSFYVVTVWYLGIWAATVIG) traverse the membrane as a helical segment. Over 565-644 (TLQPILVSKR…RKTNSKSKED (80 aa)) the chain is Cytoplasmic. The tract at residues 577-640 (DKGKRRARRS…ASNRRKTNSK (64 aa)) is disordered. The span at 588–606 (SASTSSSSSSSSSSSSGSD) shows a compositional bias: low complexity. A helical transmembrane segment spans residues 645–665 (GAIGWWIAQVLLTVPPVVMLV). Residues 666–686 (GQITSIVLEAMNQTLTDGNSA) are Vacuolar-facing. N-linked (GlcNAc...) asparagine glycosylation occurs at asparagine 677. A helical membrane pass occupies residues 687–707 (WSIYLLTALLATMLVLPVAPF). Topologically, residues 708–713 (SPKLHR) are cytoplasmic. The helical transmembrane segment at 714–734 (GLIFLSAAVFVGFTIYLWVVF) threads the bilayer. Over 735-1005 (PFTRQDPFKV…VEASAPFTVV (271 aa)) the chain is Vacuolar. 2 N-linked (GlcNAc...) asparagine glycosylation sites follow: asparagine 761 and asparagine 961.

This sequence belongs to the peptidase M28 family. Zn(2+) serves as cofactor.

The protein resides in the vacuole membrane. Its function is as follows. May be involved in vacuolar sorting and osmoregulation. The protein is Vacuolar membrane protease of Coprinopsis cinerea (strain Okayama-7 / 130 / ATCC MYA-4618 / FGSC 9003) (Inky cap fungus).